The chain runs to 802 residues: Outer membrane usher protein CssD (802 aa).

Belongs to the fimbrial export usher family.

It is found in the cell outer membrane. Functionally, involved in the export and assembly of C6 fimbrial subunits across the outer membrane. The polypeptide is Outer membrane usher protein CssD (cssD) (Escherichia coli).